The chain runs to 152 residues: MSMKNKLKNFFSMDEEEYEYEYIETEQDHPEEHEQQKDKQPAYAQKPQGKQNVVSLQSVQKSSKVVLSEPRVYAEAQEIADHLKNRRAVVVNLQRIQHDQAKRIVDFLSGTVYAIGGDIQRIGSDIFLCTPDNVDVSGTISELINEDEHQRW.

Residues 21-56 (EYIETEQDHPEEHEQQKDKQPAYAQKPQGKQNVVSL) are disordered. Positions 26 to 40 (EQDHPEEHEQQKDKQ) are enriched in basic and acidic residues.

The protein belongs to the SepF family. In terms of assembly, homodimer. Interacts with FtsZ.

It is found in the cytoplasm. In terms of biological role, cell division protein that is part of the divisome complex and is recruited early to the Z-ring. Probably stimulates Z-ring formation, perhaps through the cross-linking of FtsZ protofilaments. Its function overlaps with FtsA. In Bacillus velezensis (strain DSM 23117 / BGSC 10A6 / LMG 26770 / FZB42) (Bacillus amyloliquefaciens subsp. plantarum), this protein is Cell division protein SepF.